The chain runs to 69 residues: DNA gyrase inhibitor YacG (69 aa).

The Zn(2+) site is built by Cys7, Cys10, Cys26, and Cys30.

It belongs to the DNA gyrase inhibitor YacG family. Interacts with GyrB. It depends on Zn(2+) as a cofactor.

Functionally, inhibits all the catalytic activities of DNA gyrase by preventing its interaction with DNA. Acts by binding directly to the C-terminal domain of GyrB, which probably disrupts DNA binding by the gyrase. The chain is DNA gyrase inhibitor YacG from Shewanella sp. (strain W3-18-1).